A 681-amino-acid polypeptide reads, in one-letter code: Peroxisomal acyl-coenzyme A oxidase 2 (681 aa).

Ser9 carries the post-translational modification Phosphoserine. 5 positions are modified to N6-succinyllysine: Lys66, Lys137, Lys453, Lys561, and Lys667. Positions 679 to 681 (SNL) match the Microbody targeting signal motif.

The protein belongs to the acyl-CoA oxidase family. As to quaternary structure, homodimer. Requires FAD as cofactor. As to expression, liver and kidney.

The protein resides in the peroxisome. The enzyme catalyses (25R)-3alpha,7alpha,12alpha-trihydroxy-5beta-cholestan-26-oyl-CoA + A + H2O = (24R,25R)-3alpha,7alpha,12alpha,24-tetrahydroxy-5beta-cholestan-26-oyl-CoA + AH2. The catalysed reaction is (25S)-3alpha,7alpha,12alpha-trihydroxy-5beta-cholestan-26-oyl-CoA + O2 = (24E)-3alpha,7alpha,12alpha-trihydroxy-5beta-cholest-24-en-26-oyl-CoA + H2O2. Oxidizes the CoA esters of the bile acid intermediates di- and tri-hydroxycholestanoic acids. Capable of oxidizing short as well as long chain 2-methyl branched fatty acids. The sequence is that of Peroxisomal acyl-coenzyme A oxidase 2 from Oryctolagus cuniculus (Rabbit).